The sequence spans 503 residues: Maturase K (503 aa).

It belongs to the intron maturase 2 family. MatK subfamily.

The protein resides in the plastid. It localises to the chloroplast. Its function is as follows. Usually encoded in the trnK tRNA gene intron. Probably assists in splicing its own and other chloroplast group II introns. This is Maturase K from Agonis flexuosa (Australian willow myrtle).